The following is a 162-amino-acid chain: Transcriptional repressor NrdR (162 aa).

Positions 1 to 21 are disordered; that stretch reads MNCPDCGDEQTRVIDTETSAD. A zinc finger lies at 3-34; it reads CPDCGDEQTRVIDTETSADGTSVRRRRECQRC. An ATP-cone domain is found at 49 to 139; it reads LQVKKRNGTI…VYKAFSEPQE (91 aa).

This sequence belongs to the NrdR family. Zn(2+) is required as a cofactor.

Negatively regulates transcription of bacterial ribonucleotide reductase nrd genes and operons by binding to NrdR-boxes. This chain is Transcriptional repressor NrdR, found in Halorubrum lacusprofundi (strain ATCC 49239 / DSM 5036 / JCM 8891 / ACAM 34).